The primary structure comprises 154 residues: Ribosome maturation factor RimP (154 aa).

This sequence belongs to the RimP family.

The protein resides in the cytoplasm. Functionally, required for maturation of 30S ribosomal subunits. The protein is Ribosome maturation factor RimP of Carboxydothermus hydrogenoformans (strain ATCC BAA-161 / DSM 6008 / Z-2901).